The sequence spans 413 residues: Probable alpha-tubulin polyglutamylase Ttll1 (413 aa).

The 369-residue stretch at 2 to 370 (ASKKLKYKTD…DDWNDDSSKT (369 aa)) folds into the TTL domain. Residues 184–187 (SRYI), lysine 197, and aspartate 199 each bind ATP.

The protein belongs to the tubulin polyglutamylase family.

Its subcellular location is the cytoplasm. It is found in the cytoskeleton. It localises to the cilium basal body. The protein localises to the contractile vacuole. In terms of biological role, probable tubulin polyglutamylase with a strong preference for alpha-tubulin. Modifies alpha-tubulin, generating side chains of glutamate on the gamma-carboxyl groups of specific glutamate residues within the C-terminal tail of alpha-tubulin. The polypeptide is Probable alpha-tubulin polyglutamylase Ttll1 (Ttll1) (Tetrahymena thermophila (strain SB210)).